Here is an 848-residue protein sequence, read N- to C-terminus: Protein SEY1 (848 aa).

The Cytoplasmic segment spans residues 1–733 (MNGNFAAVGS…KRGALGGMTQ (733 aa)). In terms of domain architecture, GB1/RHD3-type G spans 47 to 277 (GFNYHLISVF…FVGGVFLPEY (231 aa)). 57–64 (GSQSTGKS) contacts GTP. The chain crosses the membrane as a helical span at residues 734-754 (VPLYFWIALFAFGWNEIWMVI). At 755–757 (RNP) the chain is on the lumenal side. The chain crosses the membrane as a helical span at residues 758 to 778 (FLFILLLLSAGGTYVAYNLSL). At 779–848 (LGPMMQMTNA…KKKDYDDDGI (70 aa)) the chain is on the cytoplasmic side. A disordered region spans residues 815 to 848 (LAMPASSKSSGGEQVRMDTLDSKGKKKDYDDDGI). Positions 829 to 848 (VRMDTLDSKGKKKDYDDDGI) are enriched in basic and acidic residues.

The protein belongs to the TRAFAC class dynamin-like GTPase superfamily. GB1/RHD3 GTPase family. RHD3 subfamily.

Its subcellular location is the endoplasmic reticulum membrane. Cooperates with the reticulon proteins and tubule-shaping DP1 family proteins to generate and maintain the structure of the tubular endoplasmic reticulum network. Has GTPase activity, which is required for its function in ER organization. In Pyricularia oryzae (strain 70-15 / ATCC MYA-4617 / FGSC 8958) (Rice blast fungus), this protein is Protein SEY1.